A 331-amino-acid chain; its full sequence is Ketol-acid reductoisomerase (NADP(+)) (331 aa).

The KARI N-terminal Rossmann domain maps to 2 to 182 (AQLFYDSDAD…GGTRAGILET (181 aa)). Residues 25 to 28 (YGSQ), Ser-51, Ser-53, and 83 to 86 (DEFQ) contribute to the NADP(+) site. His-108 is a catalytic residue. Gly-134 lines the NADP(+) pocket. The region spanning 183-328 (NFKEETETDL…KGLRAMFSWL (146 aa)) is the KARI C-terminal knotted domain. Mg(2+)-binding residues include Asp-191, Glu-195, Glu-227, and Glu-231. Ser-252 lines the substrate pocket.

Belongs to the ketol-acid reductoisomerase family. It depends on Mg(2+) as a cofactor.

It carries out the reaction (2R)-2,3-dihydroxy-3-methylbutanoate + NADP(+) = (2S)-2-acetolactate + NADPH + H(+). The enzyme catalyses (2R,3R)-2,3-dihydroxy-3-methylpentanoate + NADP(+) = (S)-2-ethyl-2-hydroxy-3-oxobutanoate + NADPH + H(+). The protein operates within amino-acid biosynthesis; L-isoleucine biosynthesis; L-isoleucine from 2-oxobutanoate: step 2/4. It functions in the pathway amino-acid biosynthesis; L-valine biosynthesis; L-valine from pyruvate: step 2/4. Its function is as follows. Involved in the biosynthesis of branched-chain amino acids (BCAA). Catalyzes an alkyl-migration followed by a ketol-acid reduction of (S)-2-acetolactate (S2AL) to yield (R)-2,3-dihydroxy-isovalerate. In the isomerase reaction, S2AL is rearranged via a Mg-dependent methyl migration to produce 3-hydroxy-3-methyl-2-ketobutyrate (HMKB). In the reductase reaction, this 2-ketoacid undergoes a metal-dependent reduction by NADPH to yield (R)-2,3-dihydroxy-isovalerate. The polypeptide is Ketol-acid reductoisomerase (NADP(+)) (Prochlorococcus marinus (strain MIT 9211)).